The sequence spans 555 residues: T-complex protein 1 subunit eta (555 aa).

This sequence belongs to the TCP-1 chaperonin family. Heterooligomeric complex of about 850 to 900 kDa that forms two stacked rings, 12 to 16 nm in diameter.

It localises to the cytoplasm. Molecular chaperone; assists the folding of proteins upon ATP hydrolysis. Known to play a role, in vitro, in the folding of actin and tubulin. This is T-complex protein 1 subunit eta (cct7) from Dictyostelium discoideum (Social amoeba).